Here is a 213-residue protein sequence, read N- to C-terminus: RNA pyrophosphohydrolase (213 aa).

One can recognise a Nudix hydrolase domain in the interval 6–149 (GFRPNVGIVL…KRGVYEIALT (144 aa)). A Nudix box motif is present at residues 38–59 (GGIDRGETPEQAMIRELHEEVG). Residues 185-213 (NFELPPGGSFEPNPQTSYGLDASGKPHET) form a disordered region.

This sequence belongs to the Nudix hydrolase family. RppH subfamily. A divalent metal cation serves as cofactor.

Its function is as follows. Accelerates the degradation of transcripts by removing pyrophosphate from the 5'-end of triphosphorylated RNA, leading to a more labile monophosphorylated state that can stimulate subsequent ribonuclease cleavage. This chain is RNA pyrophosphohydrolase, found in Albidiferax ferrireducens (strain ATCC BAA-621 / DSM 15236 / T118) (Rhodoferax ferrireducens).